A 394-amino-acid polypeptide reads, in one-letter code: Protein TsgA homolog (394 aa).

Transmembrane regions (helical) follow at residues Trp-11 to Met-31, Phe-51 to Pro-71, Leu-76 to Leu-96, Ile-101 to Val-121, Leu-134 to Met-154, Trp-162 to Cys-182, Val-206 to Ile-226, Gln-246 to Leu-266, Ile-274 to Asn-294, Ile-302 to Leu-322, Phe-334 to Val-354, and Leu-363 to Phe-383.

Belongs to the major facilitator superfamily. TsgA family.

It is found in the cell inner membrane. This is Protein TsgA homolog from Yersinia pestis bv. Antiqua (strain Antiqua).